We begin with the raw amino-acid sequence, 285 residues long: MKFAIVVNINREDALELAQELTSWLQERGLSYVLDSVSGEKTGIEPSMAMEELNKDCDAFISLGGDGTLLFTSHYSVTKPVIGINVGHLGFLAEFSKAEMFEAVEQVLNGTYSIHVRSQLEAEVTMNGGLKHLTALNDVVIEKGAYPRIPTFIIKLDDELLSAYRADGIIIATSTGSTAYSLSAGGPIIAPKSNVFVITPICPHMLTVRPIVISDDKTIQISVEAHGGEFPLNCDGHVSKMLLPGETIIVRKSEQIINLVENKNRRYCEILRSKLLWGHEHQSGS.

Aspartate 66 (proton acceptor) is an active-site residue. Residues 66-67, 137-138, arginine 148, arginine 165, aspartate 167, and 178-183 each bind NAD(+); these read DG, ND, and TAYSLS.

Belongs to the NAD kinase family. The cofactor is a divalent metal cation.

It is found in the cytoplasm. It carries out the reaction NAD(+) + ATP = ADP + NADP(+) + H(+). Functionally, involved in the regulation of the intracellular balance of NAD and NADP, and is a key enzyme in the biosynthesis of NADP. Catalyzes specifically the phosphorylation on 2'-hydroxyl of the adenosine moiety of NAD to yield NADP. The protein is NAD kinase of Prosthecochloris aestuarii (strain DSM 271 / SK 413).